A 175-amino-acid polypeptide reads, in one-letter code: Gamma-crystallin A (175 aa).

2 consecutive Beta/gamma crystallin 'Greek key' domains span residues 2–40 (GKITFYEDRGFQGHCYQCSSNNCLQQPYFSRCNSIRVDV) and 41–83 (HSWF…RLIP). The segment at 84–88 (QHTGT) is connecting peptide. Beta/gamma crystallin 'Greek key' domains are found at residues 89 to 129 (FRMR…RVLE) and 130 to 172 (GSWV…RRVM).

This sequence belongs to the beta/gamma-crystallin family.

Its function is as follows. Crystallins are the dominant structural components of the vertebrate eye lens. This is Gamma-crystallin A (CRYGA) from Bos taurus (Bovine).